Reading from the N-terminus, the 160-residue chain is Cyanate hydratase (160 aa).

Catalysis depends on residues Arg-100, Glu-103, and Ser-126.

It belongs to the cyanase family.

The catalysed reaction is cyanate + hydrogencarbonate + 3 H(+) = NH4(+) + 2 CO2. Its function is as follows. Catalyzes the reaction of cyanate with bicarbonate to produce ammonia and carbon dioxide. In Arthroderma otae (strain ATCC MYA-4605 / CBS 113480) (Microsporum canis), this protein is Cyanate hydratase.